The chain runs to 101 residues: ATP-dependent Clp protease adapter protein ClpS (101 aa).

The protein belongs to the ClpS family. Binds to the N-terminal domain of the chaperone ClpA.

Involved in the modulation of the specificity of the ClpAP-mediated ATP-dependent protein degradation. The polypeptide is ATP-dependent Clp protease adapter protein ClpS (Clostridium acetobutylicum (strain ATCC 824 / DSM 792 / JCM 1419 / IAM 19013 / LMG 5710 / NBRC 13948 / NRRL B-527 / VKM B-1787 / 2291 / W)).